A 102-amino-acid chain; its full sequence is Large ribosomal subunit protein bL21 (102 aa).

This sequence belongs to the bacterial ribosomal protein bL21 family. Part of the 50S ribosomal subunit. Contacts protein L20.

Its function is as follows. This protein binds to 23S rRNA in the presence of protein L20. The chain is Large ribosomal subunit protein bL21 from Onion yellows phytoplasma (strain OY-M).